A 97-amino-acid polypeptide reads, in one-letter code: Exodeoxyribonuclease 7 small subunit (97 aa).

The tract at residues 1-21 (MAKTATPGACASDPGSGPLPE) is disordered.

It belongs to the XseB family. Heterooligomer composed of large and small subunits.

It localises to the cytoplasm. The catalysed reaction is Exonucleolytic cleavage in either 5'- to 3'- or 3'- to 5'-direction to yield nucleoside 5'-phosphates.. Its function is as follows. Bidirectionally degrades single-stranded DNA into large acid-insoluble oligonucleotides, which are then degraded further into small acid-soluble oligonucleotides. This is Exodeoxyribonuclease 7 small subunit from Burkholderia mallei (strain NCTC 10247).